The chain runs to 365 residues: Peptidyl-prolyl cis-trans isomerase FKBP42 (365 aa).

Residues 1-15 (MDESLEHQTQTHDQE) are compositionally biased toward basic and acidic residues. Residues 1–44 (MDESLEHQTQTHDQESEIVTEGSAVVHSEPSQEGNVPPKVDSEA) are disordered. An interaction with MDR1/PGP1 region spans residues 1–163 (MDESLEHQTQ…EVIGFDETKE (163 aa)). Residues 67-159 (YSTCFLHYRA…LYEVEVIGFD (93 aa)) form the PPIase FKBP-type domain. Residues 163–337 (EGKARSDMTV…GKDEGGAKSK (175 aa)) form an interaction with MRP1 region. 3 TPR repeats span residues 179–212 (ADRR…MGDD), 230–263 (NPCH…EEKN), and 264–297 (PKAL…APDD). Positions 310-326 (QEKALYQKQKEMYKGIF) are calmodulin-binding. The chain crosses the membrane as a helical; Anchor for type IV membrane protein span at residues 338–357 (SLFWLIVLWQWFVSLFSRIF).

Belongs to the FKBP-type PPIase family. In terms of assembly, interacts with calmodulin (CaM), MRP1, MRP2, MDR1/PGP1, MDR11/PGP19 and SHD/HSP90. Interacts with 1-naphthylphthalamic acid (NPA).

It localises to the cell membrane. It is found in the vacuole membrane. The protein localises to the endoplasmic reticulum. The enzyme catalyses [protein]-peptidylproline (omega=180) = [protein]-peptidylproline (omega=0). Its function is as follows. PPIases accelerate the folding of proteins. It catalyzes the cis-trans isomerization of proline imidic peptide bonds in oligopeptides. Modulates the uptake of MRP substrates into the vacuole; reduces metolachlor-GS (MOC-GS) and enhances 17-beta-estradiol 17-(beta-D-glucuronide) (E(2)17betaG) uptake. Regulates cell elongation and orientation. Functions as a positive regulator of PGP1-mediated auxin transport. Confers drug modulation of PGP1 efflux activity as interaction with NPA or flavonol quercetin prevents its physical and functional interaction with PGP1. Required for the proper localization of auxin-related ABCB transporters. Plays a role in brassinosteroid (BR) signaling pathway. Required for seed development by promoting stamen elongation and, to a lesser extent, anther dehiscence and pollen maturation, probably as a chaperone helping ABCB1 and ABCB19 auxin transporters localization and activation. Involved in auxin signaling in nectaries to promote starch accumulation to attract visiting pollinators. In Arabidopsis thaliana (Mouse-ear cress), this protein is Peptidyl-prolyl cis-trans isomerase FKBP42.